The primary structure comprises 62 residues: Large ribosomal subunit protein bL32 (62 aa).

The span at 1-16 (MAVQKNRKTRSKRGMR) shows a compositional bias: basic residues. Residues 1 to 62 (MAVQKNRKTR…VISQGDSDDE (62 aa)) are disordered. Over residues 53–62 (VISQGDSDDE) the composition is skewed to polar residues.

This sequence belongs to the bacterial ribosomal protein bL32 family.

This chain is Large ribosomal subunit protein bL32, found in Alcanivorax borkumensis (strain ATCC 700651 / DSM 11573 / NCIMB 13689 / SK2).